The sequence spans 393 residues: MDVVCTEHQMRKPTVEIPPRKLLLSSKSFPSDSSSPRSPRKHNWNKSNKITSEHEEDNEDNNRENKEYCYDSDSDDPYASDHFRMFEFKIRRCTRSRSHDWTDCPFAHPGEKARRRDPRRFQYSGEVCPEFRRGGDCSRGDDCEFAHGVFECWLHPIRYRTEACKDGKHCKRKVCFFAHSPRQLRVLPPENVSGVSASPSPAAKNPCCLFCSSSPTSTLLGNLSHLSRSPSLSPPMSPANKAAAFSRLRNRAASAVSAAAAAGSMNYKDVLSELVNSLDSMSLAEALQASSSSPVTTPVSAAAAAFASSCGLSNQRLHLQQQQPSSPLQFALSPSTPSYLTNSPQANFFSDDFTPRRRQMNDFTAMTAVRENTNIEDGSCGDPDLGWVNDLLT.

The segment at 1 to 71 (MDVVCTEHQM…NRENKEYCYD (71 aa)) is disordered. Low complexity predominate over residues 20–37 (RKLLLSSKSFPSDSSSPR). The span at 60-69 (DNNRENKEYC) shows a compositional bias: basic and acidic residues. 2 consecutive C3H1-type zinc fingers follow at residues 122 to 150 (QYSG…HGVF) and 159 to 181 (YRTE…AHSP).

Interacts with MARD1/FLZ9 and RD21A. In terms of tissue distribution, specifically expressed in seeds.

The protein resides in the nucleus. Probable transcription repressor that functions as a negative regulator of phytochrome-mediated promotion of seed germination. Inhibits seed germination by regulating the expression of gibberellic acid (GA) and abscisic acid (ABA) metabolic genes. Does not regulate the expression of the DELLA genes RGA and RGA1. Activated by PIL5, a phytochrome-interacting basic helix-loop-helix transcription factor. Represses directly JMJ20 and JMJ22 expression in the absence of red light (R) and in far-red (FR) conditions. The protein is Zinc finger CCCH domain-containing protein 2 of Arabidopsis thaliana (Mouse-ear cress).